A 157-amino-acid chain; its full sequence is 2-C-methyl-D-erythritol 2,4-cyclodiphosphate synthase (157 aa).

D8 and H10 together coordinate a divalent metal cation. Residues 8-10 and 34-35 each bind 4-CDP-2-C-methyl-D-erythritol 2-phosphate; these read DVH and HS. H42 is a binding site for a divalent metal cation. 4-CDP-2-C-methyl-D-erythritol 2-phosphate contacts are provided by residues 56 to 58, 132 to 135, and R142; these read DIG and TTNE.

The protein belongs to the IspF family. As to quaternary structure, homotrimer. A divalent metal cation is required as a cofactor.

The catalysed reaction is 4-CDP-2-C-methyl-D-erythritol 2-phosphate = 2-C-methyl-D-erythritol 2,4-cyclic diphosphate + CMP. The protein operates within isoprenoid biosynthesis; isopentenyl diphosphate biosynthesis via DXP pathway; isopentenyl diphosphate from 1-deoxy-D-xylulose 5-phosphate: step 4/6. Its function is as follows. Involved in the biosynthesis of isopentenyl diphosphate (IPP) and dimethylallyl diphosphate (DMAPP), two major building blocks of isoprenoid compounds. Catalyzes the conversion of 4-diphosphocytidyl-2-C-methyl-D-erythritol 2-phosphate (CDP-ME2P) to 2-C-methyl-D-erythritol 2,4-cyclodiphosphate (ME-CPP) with a corresponding release of cytidine 5-monophosphate (CMP). The sequence is that of 2-C-methyl-D-erythritol 2,4-cyclodiphosphate synthase from Chlorobaculum tepidum (strain ATCC 49652 / DSM 12025 / NBRC 103806 / TLS) (Chlorobium tepidum).